Here is a 339-residue protein sequence, read N- to C-terminus: Glycerol-3-phosphate dehydrogenase [NAD(P)+] (339 aa).

NADPH is bound by residues serine 15, tyrosine 16, histidine 36, and lysine 110. Sn-glycerol 3-phosphate is bound by residues lysine 110, glycine 139, and threonine 141. Alanine 143 serves as a coordination point for NADPH. Sn-glycerol 3-phosphate is bound by residues lysine 195, aspartate 248, serine 258, arginine 259, and asparagine 260. Lysine 195 (proton acceptor) is an active-site residue. Arginine 259 is a binding site for NADPH. The NADPH site is built by valine 283 and glutamate 285.

This sequence belongs to the NAD-dependent glycerol-3-phosphate dehydrogenase family.

Its subcellular location is the cytoplasm. It catalyses the reaction sn-glycerol 3-phosphate + NAD(+) = dihydroxyacetone phosphate + NADH + H(+). The enzyme catalyses sn-glycerol 3-phosphate + NADP(+) = dihydroxyacetone phosphate + NADPH + H(+). The protein operates within membrane lipid metabolism; glycerophospholipid metabolism. Catalyzes the reduction of the glycolytic intermediate dihydroxyacetone phosphate (DHAP) to sn-glycerol 3-phosphate (G3P), the key precursor for phospholipid synthesis. This is Glycerol-3-phosphate dehydrogenase [NAD(P)+] from Pectobacterium atrosepticum (strain SCRI 1043 / ATCC BAA-672) (Erwinia carotovora subsp. atroseptica).